Here is a 117-residue protein sequence, read N- to C-terminus: Large ribosomal subunit protein bL20 (117 aa).

Belongs to the bacterial ribosomal protein bL20 family.

Binds directly to 23S ribosomal RNA and is necessary for the in vitro assembly process of the 50S ribosomal subunit. It is not involved in the protein synthesizing functions of that subunit. This Rickettsia akari (strain Hartford) protein is Large ribosomal subunit protein bL20.